Consider the following 445-residue polypeptide: Dolichyl-diphosphooligosaccharide--protein glycosyltransferase 48 kDa subunit (445 aa).

Positions 1 to 20 (MRWLPGLLLIASIGFHQSLA) are cleaved as a signal peptide. The Lumenal portion of the chain corresponds to 21–405 (DRVLVLGETA…YERFIRSAYP (385 aa)). Residues 406–426 (YYASSFSMMAGLVLFSIVYLY) form a helical membrane-spanning segment. Residues 427–445 (HKDTPVKGAKVLDSEKKKN) are Cytoplasmic-facing.

It belongs to the DDOST 48 kDa subunit family. Component of the oligosaccharyltransferase (OST) complex.

It localises to the endoplasmic reticulum membrane. Its pathway is protein modification; protein glycosylation. Functionally, subunit of the oligosaccharyl transferase (OST) complex that catalyzes the initial transfer of a defined glycan (Glc(3)Man(9)GlcNAc(2) in eukaryotes) from the lipid carrier dolichol-pyrophosphate to an asparagine residue within an Asn-X-Ser/Thr consensus motif in nascent polypeptide chains, the first step in protein N-glycosylation. N-glycosylation occurs cotranslationally and the complex associates with the Sec61 complex at the channel-forming translocon complex that mediates protein translocation across the endoplasmic reticulum (ER). All subunits are required for a maximal enzyme activity. Required for the assembly of both SST3A- and SS3B-containing OST complexes. Required for normal lifespan. The protein is Dolichyl-diphosphooligosaccharide--protein glycosyltransferase 48 kDa subunit of Caenorhabditis elegans.